Consider the following 147-residue polypeptide: Leghemoglobin 8 (147 aa).

The Globin domain occupies G2 to S147. Nitrated tyrosine occurs at positions 25 and 30. Heme b is bound at residue S45. The residue at position 45 (S45) is a Phosphoserine. H62 contributes to the O2 binding site. Positions 65, 94, and 97 each coordinate heme b. A Nitrated tyrosine modification is found at Y135.

The protein belongs to the plant globin family. As to quaternary structure, monomer. Interacts with CAS31 in the cytoplasm; this interaction leads to its protection from denaturation under thermal and drought stresses. In terms of processing, nitrated in effective nodules and particularly in hypoxic conditions; this mechanism may play a protective role in the symbiosis by buffering toxic peroxynitrite NO(2)(-). Nitration level decrease during nodule senescence. Phosphorylation at Ser-45 disrupts the molecular environment of its porphyrin ring oxygen binding pocket, thus leading to a reduced oxygen consumption and to the delivery of oxygen O(2) to symbiosomes. In terms of tissue distribution, root nodules.

It localises to the cytoplasm. The protein resides in the nucleus. Its function is as follows. Leghemoglobin that reversibly binds oxygen O(2) through a pentacoordinated heme iron. In root nodules, facilitates the diffusion of oxygen to the bacteroids while preventing the bacterial nitrogenase from being inactivated by buffering dioxygen, nitric oxide and carbon monoxide, and promoting the formation of reactive oxygen species (ROS, e.g. H(2)O(2)). This role is essential for symbiotic nitrogen fixation (SNF). This Medicago truncatula (Barrel medic) protein is Leghemoglobin 8.